The sequence spans 442 residues: D-serine dehydratase (442 aa).

The residue at position 118 (Lys118) is an N6-(pyridoxal phosphate)lysine.

The protein belongs to the serine/threonine dehydratase family. DsdA subfamily. As to quaternary structure, monomer. It depends on pyridoxal 5'-phosphate as a cofactor.

The enzyme catalyses D-serine = pyruvate + NH4(+). The chain is D-serine dehydratase from Escherichia coli O81 (strain ED1a).